The following is a 92-amino-acid chain: Small ribosomal subunit protein uS19 (92 aa).

Belongs to the universal ribosomal protein uS19 family.

Functionally, protein S19 forms a complex with S13 that binds strongly to the 16S ribosomal RNA. In Borrelia recurrentis (strain A1), this protein is Small ribosomal subunit protein uS19.